The sequence spans 387 residues: 3-ketoacyl-CoA thiolase (387 aa).

C91 (acyl-thioester intermediate) is an active-site residue. Residues H343 and C373 each act as proton acceptor in the active site.

Belongs to the thiolase-like superfamily. Thiolase family. Heterotetramer of two alpha chains (FadB) and two beta chains (FadA).

The protein resides in the cytoplasm. It catalyses the reaction an acyl-CoA + acetyl-CoA = a 3-oxoacyl-CoA + CoA. Its pathway is lipid metabolism; fatty acid beta-oxidation. Functionally, catalyzes the final step of fatty acid oxidation in which acetyl-CoA is released and the CoA ester of a fatty acid two carbons shorter is formed. The protein is 3-ketoacyl-CoA thiolase of Aliivibrio salmonicida (strain LFI1238) (Vibrio salmonicida (strain LFI1238)).